The primary structure comprises 412 residues: MSSKGSVVLAYSGGLDTSCILVWLKEQGYDVIAYLANIGQKEDFEEARKKALKLGAKKVFIEDVSKEFVEEFIWPAVQSSALYEDRYLLGTSLARPCIARRQVEIAQREGAKYVSHGATGKGNDQVRFELTCYSLAPQIKVIAPWRMPEFYNRFKGRNDLMEYAKQHGIPIPVTPKSPWSMDENLMHISYEAGILENPKNQAPPGLYTKTQDPAKAPNSPDVLEIEFKKGVPVKVTNIKDGTTRTTSLELFMYLNEVAGKHGVGRIDIVENRFIGMKSRGIYETPAGTILYHAHLDIEAFTMDREVRKIKQGLGLKFAELVYTGFWHSPECEFVRHCIQKSQERVEGKVQVSVFKGQVYILGRESPLSLYNEELVSMNVQGDYEPIDATGFININSLRLKEYHRLQSKVTAK.

Residues 10 to 18 and A36 each bind ATP; that span reads AYSGGLDTS. 2 residues coordinate L-citrulline: Y87 and S92. At Y87 the chain carries Phosphotyrosine. K112 carries the post-translational modification N6-acetyllysine. Position 113 is a phosphotyrosine (Y113). 115–123 provides a ligand contact to ATP; sequence SHGATGKGN. L-aspartate is bound by residues T119, N123, and D124. Residue N123 participates in L-citrulline binding. Position 127 (R127) interacts with L-citrulline. K165 and K176 each carry N6-acetyllysine; by CLOCK. 2 positions are modified to phosphoserine: S177 and S180. S180 and S189 together coordinate L-citrulline. A Phosphoserine modification is found at S219. Residues E270 and Y282 each contribute to the L-citrulline site.

This sequence belongs to the argininosuccinate synthase family. Type 1 subfamily. As to quaternary structure, homotetramer. Interacts with NMRAL1. Interacts with CLOCK; in a circadian manner. Forms tissue-specific complexes with ASL, SLC7A1, HSP90AA1 and nitric oxide synthase NOS1, NOS2 or NOS3; the complex regulates cell-autonomous L-arginine synthesis and citrulline recycling while channeling extracellular L-arginine to nitric oxide synthesis pathway. In terms of processing, acetylated by CLOCK in a circadian manner which negatively regulates its enzyme activity. Deacetylated by histone deacetylases. As to expression, widely expressed.

The protein resides in the cytoplasm. It localises to the cytosol. The catalysed reaction is L-citrulline + L-aspartate + ATP = 2-(N(omega)-L-arginino)succinate + AMP + diphosphate + H(+). Its pathway is amino-acid biosynthesis; L-arginine biosynthesis; L-arginine from L-ornithine and carbamoyl phosphate: step 2/3. The protein operates within nitrogen metabolism; urea cycle; (N(omega)-L-arginino)succinate from L-aspartate and L-citrulline: step 1/1. Functionally, one of the enzymes of the urea cycle, the metabolic pathway transforming neurotoxic amonia produced by protein catabolism into inocuous urea in the liver of ureotelic animals. Catalyzes the formation of arginosuccinate from aspartate, citrulline and ATP and together with ASL it is responsible for the biosynthesis of arginine in most body tissues. This Mus musculus (Mouse) protein is Argininosuccinate synthase.